The chain runs to 672 residues: DNA ligase (672 aa).

Residues D37–D41, S86–L87, and E115 contribute to the NAD(+) site. The N6-AMP-lysine intermediate role is filled by K117. NAD(+)-binding residues include R138, E172, K288, and K312. Positions 406, 409, 424, and 429 each coordinate Zn(2+). The 83-residue stretch at D590–V672 folds into the BRCT domain.

The protein belongs to the NAD-dependent DNA ligase family. LigA subfamily. Requires Mg(2+) as cofactor. Mn(2+) serves as cofactor.

It catalyses the reaction NAD(+) + (deoxyribonucleotide)n-3'-hydroxyl + 5'-phospho-(deoxyribonucleotide)m = (deoxyribonucleotide)n+m + AMP + beta-nicotinamide D-nucleotide.. In terms of biological role, DNA ligase that catalyzes the formation of phosphodiester linkages between 5'-phosphoryl and 3'-hydroxyl groups in double-stranded DNA using NAD as a coenzyme and as the energy source for the reaction. It is essential for DNA replication and repair of damaged DNA. This Anoxybacillus flavithermus (strain DSM 21510 / WK1) protein is DNA ligase.